Here is a 24-residue protein sequence, read N- to C-terminus: General odorant-binding protein (24 aa).

This sequence belongs to the PBP/GOBP family. In terms of assembly, homodimer. Antenna.

Functionally, present in the aqueous fluid surrounding olfactory sensory dendrites and are thought to aid in the capture and transport of hydrophobic odorants into and through this fluid. The protein is General odorant-binding protein of Antheraea polyphemus (Polyphemus moth).